The chain runs to 275 residues: Elongation factor Ts (275 aa).

Positions 76–79 (TDFV) are involved in Mg(2+) ion dislocation from EF-Tu.

It belongs to the EF-Ts family.

Its subcellular location is the cytoplasm. Associates with the EF-Tu.GDP complex and induces the exchange of GDP to GTP. It remains bound to the aminoacyl-tRNA.EF-Tu.GTP complex up to the GTP hydrolysis stage on the ribosome. This is Elongation factor Ts from Mycolicibacterium paratuberculosis (strain ATCC BAA-968 / K-10) (Mycobacterium paratuberculosis).